We begin with the raw amino-acid sequence, 6199 residues long: Adhesion G-protein coupled receptor V1 (6199 aa).

The signal sequence occupies residues 1-23 (MPAVLALSGLLLMLLTVSVRSES). Calx-beta domains are found at residues 24–109 (AELR…VFIL), 126–230 (ATIT…VQLT), 249–355 (ISRN…QVVL), 380–480 (DKPY…LKLI), 637–737 (PDIA…ILTL), 753–853 (SREI…VVLS), 869–972 (NITV…ITLL), 997–1083 (IYFA…YIVL), 1099–1199 (TVVI…LRLM), 1434–1534 (PIPG…FYLQ), 1563–1655 (GLFS…RVRL), 1835–1937 (IIVT…VRLT), 1963–2063 (LFVF…FLEL), 2092–2190 (QVII…RIEL), 2208–2308 (ITIL…KVEL), 2425–2525 (AAFC…FIIK), 2582–2659 (VREE…QIGL), 2673–2773 (DTVT…RVIL), 2814–2908 (PSSL…LVNI), 2931–3029 (EIII…QLIL), and 3054–3154 (GHGI…TVTL). Residues 24–5803 (AELRFQGQTQ…IESLASFNEA (5780 aa)) are Extracellular-facing. EAR repeat units follow at residues 3239–3284 (VLAV…KWQG), 3285–3333 (VFVP…RVQA), 3336–3372 (NLTLEQTFSVSGFSVKHFSTDLKQYLIASSEIFVWNR), 3374–3420 (SFFL…QWTD), 3422–3467 (RFQN…LWGS), and 3471–3513 (VFQQ…SWRS). 13 Calx-beta domains span residues 3562–3605 (SNQS…RVSL), 3619–3719 (QVTF…TIVL), 3778–3854 (ITLS…FVNI), 3916–3985 (VLRL…MVKL), 4000–4103 (VVVS…IQLL), 4120–4220 (VVIR…QLRL), 4247–4335 (HGLF…FLNI), 4371–4471 (VIIQ…LQLT), 4493–4593 (DSPN…IIML), 4615–4715 (KFGD…TLRL), 4993–5076 (QHLV…VNLT), 5125–5225 (SEDS…IYLS), and 5260–5360 (VGFS…LVEV). One can recognise a GAIN-B domain in the interval 5636 to 5801 (PYFTIAAHHW…AEIESLASFN (166 aa)). 2 disulfides stabilise this stretch: C5751/C5780 and C5768/C5782. Residues 5751 to 5801 (CLLWNQAAESWLSDGQFCRLVDDTQNYVECACSHLSIYTAYAEIESLASFN) are GPS. The helical transmembrane segment at 5804–5824 (FYAAGFICISGFALAMVSHLM) threads the bilayer. Residues 5825–5834 (CARFLMFAAK) are Cytoplasmic-facing. A helical membrane pass occupies residues 5835-5855 (LLTHMMVACLGTQICFLVSAF). Residues 5856–5864 (RGRMFSEDS) are Extracellular-facing. A helical membrane pass occupies residues 5865–5885 (CAALGLFFHYFHLSQFGWMLV). The Cytoplasmic segment spans residues 5886-5908 (QAINFWQILVMNDEHTERRYLLY). A helical membrane pass occupies residues 5909 to 5929 (FLLSWGLPALVIIVLVVVLLG). Topologically, residues 5930–5954 (GFGWSIHSVYGLVQGDLCFIPNVYA) are extracellular. The chain crosses the membrane as a helical span at residues 5955–5975 (ALCTAALVPLICLVGVLVIFI). Over 5976 to 6001 (HAYQVTQQWKAYDDIYRGRTNSSEVP) the chain is Cytoplasmic. The chain crosses the membrane as a helical span at residues 6002-6022 (MMLYLFALVTLVCVWAGLHMA). Over 6023 to 6025 (YRY) the chain is Extracellular. A helical transmembrane segment spans residues 6026–6046 (IWMLILLVIFNIFLGLYVFSV). At 6047 to 6199 (YFVMHNQLFW…RRIPIADTHL (153 aa)) the chain is on the cytoplasmic side.

The protein belongs to the G-protein coupled receptor 2 family. Adhesion G-protein coupled receptor (ADGR) subfamily. Heterodimer of 2 chains generated by proteolytic processing; the large extracellular N-terminal fragment and the membrane-bound C-terminal fragment predominantly remain associated and non-covalently linked. In terms of processing, autoproteolytically processed at the GPS region of the GAIN-B domain; this cleavage modulates receptor activity.

The protein localises to the cell membrane. The protein resides in the cell projection. It is found in the stereocilium membrane. Its subcellular location is the photoreceptor inner segment. Receptor that may have an important role in the development of the sensory nervous system. This Danio rerio (Zebrafish) protein is Adhesion G-protein coupled receptor V1 (adgrv1).